The chain runs to 249 residues: Large ribosomal subunit protein uL10m (249 aa).

The N-terminal 31 residues, Met-1 to Tyr-31, are a transit peptide targeting the mitochondrion. Positions Ser-226 to Lys-249 are disordered.

Belongs to the universal ribosomal protein uL10 family. Component of the mitochondrial large ribosomal subunit (mt-LSU). Mature yeast 74S mitochondrial ribosomes consist of a small (37S) and a large (54S) subunit. The 37S small subunit contains a 15S ribosomal RNA (15S mt-rRNA) and 34 different proteins. The 54S large subunit contains a 21S rRNA (21S mt-rRNA) and 46 different proteins.

The protein localises to the mitochondrion. Its function is as follows. Component of the mitochondrial ribosome (mitoribosome), a dedicated translation machinery responsible for the synthesis of mitochondrial genome-encoded proteins, including at least some of the essential transmembrane subunits of the mitochondrial respiratory chain. The mitoribosomes are attached to the mitochondrial inner membrane and translation products are cotranslationally integrated into the membrane. This chain is Large ribosomal subunit protein uL10m (MRPL11), found in Saccharomyces cerevisiae (strain ATCC 204508 / S288c) (Baker's yeast).